A 264-amino-acid chain; its full sequence is Thymidylate synthase (264 aa).

R21 is a binding site for dUMP. H51 provides a ligand contact to (6R)-5,10-methylene-5,6,7,8-tetrahydrofolate. R126 to R127 is a dUMP binding site. The active-site Nucleophile is C146. Residues R166 to D169, N177, and H207 to Y209 each bind dUMP. D169 contributes to the (6R)-5,10-methylene-5,6,7,8-tetrahydrofolate binding site. A263 is a (6R)-5,10-methylene-5,6,7,8-tetrahydrofolate binding site.

Belongs to the thymidylate synthase family. Bacterial-type ThyA subfamily. In terms of assembly, homodimer.

The protein resides in the cytoplasm. It catalyses the reaction dUMP + (6R)-5,10-methylene-5,6,7,8-tetrahydrofolate = 7,8-dihydrofolate + dTMP. It participates in pyrimidine metabolism; dTTP biosynthesis. In terms of biological role, catalyzes the reductive methylation of 2'-deoxyuridine-5'-monophosphate (dUMP) to 2'-deoxythymidine-5'-monophosphate (dTMP) while utilizing 5,10-methylenetetrahydrofolate (mTHF) as the methyl donor and reductant in the reaction, yielding dihydrofolate (DHF) as a by-product. This enzymatic reaction provides an intracellular de novo source of dTMP, an essential precursor for DNA biosynthesis. The protein is Thymidylate synthase of Xanthomonas campestris pv. campestris (strain 8004).